Consider the following 544-residue polypeptide: Chaperonin GroEL (544 aa).

ATP-binding positions include 29–32, 86–90, glycine 413, 476–478, and aspartate 492; these read TLGP, DGTTT, and NAA.

Belongs to the chaperonin (HSP60) family. Forms a cylinder of 14 subunits composed of two heptameric rings stacked back-to-back. Interacts with the co-chaperonin GroES.

The protein localises to the cytoplasm. It catalyses the reaction ATP + H2O + a folded polypeptide = ADP + phosphate + an unfolded polypeptide.. In terms of biological role, together with its co-chaperonin GroES, plays an essential role in assisting protein folding. The GroEL-GroES system forms a nano-cage that allows encapsulation of the non-native substrate proteins and provides a physical environment optimized to promote and accelerate protein folding. The sequence is that of Chaperonin GroEL from Bacillus pumilus (strain SAFR-032).